The primary structure comprises 117 residues: Large ribosomal subunit protein bL20 (117 aa).

Belongs to the bacterial ribosomal protein bL20 family.

Binds directly to 23S ribosomal RNA and is necessary for the in vitro assembly process of the 50S ribosomal subunit. It is not involved in the protein synthesizing functions of that subunit. This is Large ribosomal subunit protein bL20 from Rickettsia peacockii (strain Rustic).